Consider the following 295-residue polypeptide: Small ribosomal subunit protein uS2 (295 aa).

The segment at 261–295 is disordered; it reads QAKKFSKTKNIDEETNTEFEQVLNDADENKNSDNA.

The protein belongs to the universal ribosomal protein uS2 family.

This chain is Small ribosomal subunit protein uS2, found in Rickettsia rickettsii (strain Sheila Smith).